Consider the following 176-residue polypeptide: RNA pyrophosphohydrolase (176 aa).

Positions 8–159 (PYRTCVGMML…KRPVYERVVK (152 aa)) constitute a Nudix hydrolase domain. Residues 47 to 68 (GGVDPGEDTWAAAKRELYEETS) carry the Nudix box motif.

Belongs to the Nudix hydrolase family. RppH subfamily. The cofactor is a divalent metal cation.

In terms of biological role, accelerates the degradation of transcripts by removing pyrophosphate from the 5'-end of triphosphorylated RNA, leading to a more labile monophosphorylated state that can stimulate subsequent ribonuclease cleavage. This is RNA pyrophosphohydrolase from Rhodopseudomonas palustris (strain BisA53).